The primary structure comprises 1128 residues: Probable serine/threonine-protein kinase DDB_G0283337 (1128 aa).

The span at 1-17 (MENNNNNNINKTNTPNN) shows a compositional bias: low complexity. Disordered regions lie at residues 1 to 21 (MENN…SFSP), 60 to 100 (INHN…NNNN), 131 to 151 (RESN…NNSN), 236 to 256 (NNSK…SNSN), and 375 to 504 (NDNE…NSEQ). 2 stretches are compositionally biased toward low complexity: residues 243–256 (NSSN…SNSN) and 375–502 (NDNE…NNNS). Positions 777–1054 (LSDFSIIGEG…EIQKCKEEYE (278 aa)) constitute a Protein kinase domain. ATP contacts are provided by residues 783–791 (IGEGGFSTV) and Lys-809. Catalysis depends on Asp-904, which acts as the Proton acceptor.

The protein belongs to the protein kinase superfamily. Ser/Thr protein kinase family.

The catalysed reaction is L-seryl-[protein] + ATP = O-phospho-L-seryl-[protein] + ADP + H(+). It carries out the reaction L-threonyl-[protein] + ATP = O-phospho-L-threonyl-[protein] + ADP + H(+). This chain is Probable serine/threonine-protein kinase DDB_G0283337, found in Dictyostelium discoideum (Social amoeba).